Here is a 34-residue protein sequence, read N- to C-terminus: Calcitonin-like peptide 1 (34 aa).

A disulfide bridge connects residues cysteine 2 and cysteine 7. Position 34 is a proline amide (proline 34).

In Odorrana schmackeri (Schmacker's frog), this protein is Calcitonin-like peptide 1.